A 160-amino-acid polypeptide reads, in one-letter code: Ribosomal RNA large subunit methyltransferase H (160 aa).

Residues Leu77, Gly109, and 128 to 133 (FGRITL) contribute to the S-adenosyl-L-methionine site.

This sequence belongs to the RNA methyltransferase RlmH family. Homodimer.

It is found in the cytoplasm. The catalysed reaction is pseudouridine(1915) in 23S rRNA + S-adenosyl-L-methionine = N(3)-methylpseudouridine(1915) in 23S rRNA + S-adenosyl-L-homocysteine + H(+). Specifically methylates the pseudouridine at position 1915 (m3Psi1915) in 23S rRNA. The sequence is that of Ribosomal RNA large subunit methyltransferase H from Oenococcus oeni (strain ATCC BAA-331 / PSU-1).